Consider the following 695-residue polypeptide: Segment polarity protein dishevelled homolog DVL-1 (695 aa).

One can recognise a DIX domain in the interval 1–85 (MAETKIIYHM…RVVSWLVLAE (85 aa)). Residues 89–237 (SDAGSQGTDS…LRQADRASSF (149 aa)) are disordered. Positions 142 to 151 (SHRRERARRR) are enriched in basic residues. Positions 152–171 (NREEAARTNGHPRGDRRRDV) are enriched in basic and acidic residues. The segment covering 176–192 (DSASTALSSELESSSFV) has biased composition (low complexity). The residue at position 194 (S194) is a Phosphoserine. A compositionally biased stretch (low complexity) spans 200–214 (TSRLSSSTEQSTSSR). Positions 215-228 (LIRKHKRRRRKQRL) are enriched in basic residues. The region spanning 251-323 (TVTLNMERHH…NDDAVRVLRE (73 aa)) is the PDZ domain. Residues 425–499 (PDSGLEIRDR…SEQCYYVFGD (75 aa)) enclose the DEP domain. The interval 543–667 (PGPPPCFPPA…PGGPPVRELA (125 aa)) is disordered. Low complexity predominate over residues 551-580 (PAYQDPGFSYGSGSTGSQQSEGSKSSGSTR). A compositionally biased stretch (polar residues) spans 625-636 (SRGSSPRSQASA).

This sequence belongs to the DSH family. As to quaternary structure, interacts with CXXC4. Interacts (via PDZ domain) with NXN. Interacts with BRD7 and INVS. Interacts (via PDZ domain) with VANGL1 and VANGL2 (via C-terminus). Interacts with ARRB1; the interaction is enhanced by phosphorylation of DVL1. Interacts with CYLD. Interacts (via PDZ domain) with RYK. Self-associates (via DIX domain) and forms higher homooligomers. Interacts (via PDZ domain) with DACT1 and FZD7, where DACT1 and FZD7 compete for the same binding site. Interacts (via DEP domain) with MUSK; the interaction is direct and mediates the formation a DVL1, MUSK and PAK1 ternary complex involved in AChR clustering. Interacts (via PDZ domain) with TMEM88. Interacts with DCDC2. Interacts with FOXK2. Interacts with PKD1 (via extracellular domain). Interacts (via PDZ domain) with CCDC88C/DAPLE; competes with CCDC88C for binding to frizzled receptor FZD7 and dissociates from CCDC88C following initiation of non-canonical Wnt signaling when CCDC88C displaces DVL1 from ligand-activated FZD7. In terms of processing, ubiquitinated; undergoes both 'Lys-48'-linked ubiquitination, leading to its subsequent degradation by the ubiquitin-proteasome pathway, and 'Lys-63'-linked ubiquitination. The interaction with INVS is required for ubiquitination. Deubiquitinated by CYLD, which acts on 'Lys-63'-linked ubiquitin chains.

It localises to the cell membrane. Its subcellular location is the cytoplasm. The protein resides in the cytosol. The protein localises to the cytoplasmic vesicle. Participates in Wnt signaling by binding to the cytoplasmic C-terminus of frizzled family members and transducing the Wnt signal to down-stream effectors. Plays a role both in canonical and non-canonical Wnt signaling. Plays a role in the signal transduction pathways mediated by multiple Wnt genes. Required for LEF1 activation upon WNT1 and WNT3A signaling. DVL1 and PAK1 form a ternary complex with MUSK which is important for MUSK-dependent regulation of AChR clustering during the formation of the neuromuscular junction (NMJ). This Homo sapiens (Human) protein is Segment polarity protein dishevelled homolog DVL-1 (DVL1).